The primary structure comprises 161 residues: Nucleotide-binding protein Lferr_1091 (161 aa).

The protein belongs to the YajQ family.

Nucleotide-binding protein. The polypeptide is Nucleotide-binding protein Lferr_1091 (Acidithiobacillus ferrooxidans (strain ATCC 53993 / BNL-5-31) (Leptospirillum ferrooxidans (ATCC 53993))).